We begin with the raw amino-acid sequence, 3011 residues long: Genome polyprotein (3011 aa).

Position 2 is an N-acetylserine; by host (Ser2). The interaction with STAT1 stretch occupies residues 2–23 (STIPKPQRKTKRNTNRRPQDVK). The interval 2–58 (STIPKPQRKTKRNTNRRPQDVKFPGGGQIVGGVYLLPRRGPRLGVRATRKTSERSQP) is interaction with EIF2AK2/PKR. Residues 2–59 (STIPKPQRKTKRNTNRRPQDVKFPGGGQIVGGVYLLPRRGPRLGVRATRKTSERSQPR) are interaction with DDX3X. Positions 2–75 (STIPKPQRKT…PKVRRPEGRT (74 aa)) are disordered. Residues 2–168 (STIPKPQRKT…EDGVNYATGN (167 aa)) are Cytoplasmic-facing. Short sequence motifs (nuclear localization signal) lie at residues 5–13 (PKPQRKTKR) and 38–43 (PRRGPR). The span at 7–16 (PQRKTKRNTN) shows a compositional bias: basic residues. Over residues 32–47 (GGVYLLPRRGPRLGVR) the composition is skewed to low complexity. Ser53 is subject to Phosphoserine; by host. 2 consecutive short sequence motifs (nuclear localization signal) follow at residues 58 to 64 (PRGRRQP) and 66 to 71 (PKVRRP). Over residues 58–68 (PRGRRQPIPKV) the composition is skewed to basic residues. A Phosphoserine; by host modification is found at Ser99. The important for endoplasmic reticulum and mitochondrial localization stretch occupies residues 112–152 (PRRRSRNLGKVIDTLTCGFADLMGYIPLVGAPLGGAARALA). Position 116 is a phosphoserine; by host PKA (Ser116). Residues 122–173 (VIDTLTCGFADLMGYIPLVGAPLGGAARALAHGVRVLEDGVNYATGNLPGCS) are interaction with APOA2. Residues 164–167 (YATG) are important for lipid droplets localization. Residues 169-189 (LPGCSFSIFLLALLSCLTVPA) form a helical membrane-spanning segment. A propeptide spans 178-191 (LLALLSCLTVPASA) (ER anchor for the core protein, removed in mature form by host signal peptidase). The Lumenal segment spans residues 190 to 358 (SAYQVRNSTG…AGAHWGVLAG (169 aa)). Residues Asn196, Asn209, and Asn234 are each glycosylated (N-linked (GlcNAc...) asparagine; by host). Residues 265 to 296 (LVGSATLCSALYVGDLCGSVFLIGQLFTFSPR) are important for fusion. Asn305 is a glycosylation site (N-linked (GlcNAc...) asparagine; by host). A helical transmembrane segment spans residues 359–379 (IAYFSMVGNWAKVLVVLLLFA). Over 380-725 (GVDAETIVSG…WEYVVLLFLL (346 aa)) the chain is Lumenal. Residues 385–411 (TIVSGGQAARAMSGLVSLFTPGAKQNI) form an HVR1 region. 4 N-linked (GlcNAc...) (high mannose) asparagine; by host glycosylation sites follow: Asn417, Asn423, Asn430, and Asn448. Intrachain disulfides connect Cys429–Cys552, Cys452–Cys459, Cys486–Cys494, and Cys503–Cys508. An HVR2 region spans residues 474-479 (HANGSG). The CD81-binding 1 stretch occupies residues 480–493 (PDQRPYCWHYPPKP). Asn532 carries an N-linked (GlcNAc...) (high mannose) asparagine; by host glycan. Asn540 is a glycosylation site (N-linked (GlcNAc...) asparagine; by host). A CD81-binding 2 region spans residues 544-551 (PPLGNWFG). Asn556 carries an N-linked (GlcNAc...) (high mannose) asparagine; by host glycan. An intrachain disulfide couples Cys564 to Cys569. Asn576 carries an N-linked (GlcNAc...) (high mannose) asparagine; by host glycan. Disulfide bonds link Cys581-Cys585, Cys597-Cys620, and Cys607-Cys644. Asn623 and Asn645 each carry an N-linked (GlcNAc...) (high mannose) asparagine; by host glycan. An intrachain disulfide couples Cys652 to Cys677. Residues 660 to 671 (SELSPLLLSTTQ) form a PKR/eIF2-alpha phosphorylation homology domain (PePHD) region. The chain crosses the membrane as a helical span at residues 726-746 (LADARVCSCLWMMLLISQAEA). Over 747 to 757 (ALENLVILNAA) the chain is Lumenal. A helical membrane pass occupies residues 758–778 (SLAGTRGLVSFLVFFCFAWYL). Residues 779 to 781 (KGR) are Cytoplasmic-facing. Residues 782–803 (WVPGAAYALYGMWPLLLLLLAL) traverse the membrane as a helical segment. Residues 804–813 (PQRAYALDTE) lie on the Lumenal side of the membrane. A helical transmembrane segment spans residues 814–834 (VAASCGGVVLVGLMALTLSPY). The Cytoplasmic segment spans residues 835–838 (YKRC). A helical membrane pass occupies residues 839–859 (ISWCLWWLQYFLTRVEAQLHV). At 860–881 (WVPPLNVRGGRDAVILLMCVVH) the chain is on the lumenal side. Residues 882-902 (PTLVFDITKLLLAVLGPLWIL) traverse the membrane as a helical segment. In terms of domain architecture, Peptidase C18 spans 903–1026 (QASLLKVPYF…GMVSKGWRLL (124 aa)). The Cytoplasmic portion of the chain corresponds to 903 to 1657 (QASLLKVPYF…CMSADLEVVT (755 aa)). The tract at residues 904–1206 (ASLLKVPYFV…PVESLETTMR (303 aa)) is protease NS2-3. Cys922 is lipidated: S-palmitoyl cysteine; by host. The tract at residues 929–949 (VGGHYVQMAIIKLGALTGTYV) is interaction with host SCPS1. Residues His952, Glu972, and Cys993 each act as for protease NS2 activity; shared with dimeric partner in the active site. A Peptidase S29 domain is found at 1027 to 1208 (APITAYAQQT…ESLETTMRSP (182 aa)). Residues His1083 and Asp1107 each act as charge relay system; for serine protease NS3 activity in the active site. Residues Cys1123 and Cys1125 each coordinate Zn(2+). Ser1165 acts as the Charge relay system; for serine protease NS3 activity in catalysis. Residues Cys1171 and His1175 each contribute to the Zn(2+) site. A Helicase ATP-binding domain is found at 1217–1369 (PAVPQSFQVA…ANIEEVALST (153 aa)). 1230–1237 (APTGSGKS) provides a ligand contact to ATP. Residues Ser1237 and Glu1317 each coordinate Mg(2+). Residues 1316-1319 (DECH) carry the DECH box motif. Positions 1486–1497 (QRRGRTGRGKPG) are RNA-binding. A helical transmembrane segment spans residues 1658–1678 (STWVLVGGVLAALAAYCLSTG). Residues 1679 to 1690 (CVVIVGRIVLSG) form an NS3-binding region. At 1679–1805 (CVVIVGRIVL…AVTSPLTTSQ (127 aa)) the chain is on the cytoplasmic side. Residues 1806-1824 (TLLFNILGGWVAAQLAAPG) traverse the membrane as a helical segment. Over 1825–1828 (AATA) the chain is Lumenal. The helical transmembrane segment at 1829 to 1849 (FVGSGLAGAAVGSVGLGRVLV) threads the bilayer. Position 1850 (Asp1850) is a topological domain, cytoplasmic. The chain crosses the membrane as a helical span at residues 1851-1871 (ILAGYGAGVAGALVAFKIMSG). The Lumenal segment spans residues 1872–1881 (ELPSTEDLVN). Residues 1882–1902 (LLPAILSPGALVVGVVCAAIL) traverse the membrane as a helical segment. The Cytoplasmic segment spans residues 1903–1972 (RRHVGPGEGA…WLSSESTTPC (70 aa)). Cys1972 carries S-palmitoyl cysteine; by host lipidation. An intramembrane segment occupies 1973–2002 (SGSWLRDIWDWICEVLSDFKTWLKTKLMPH). Residues 2003–2990 (LPGIPFVSCQ…YHSVSHARPR (988 aa)) lie on the Cytoplasmic side of the membrane. Residues Cys2011, Cys2029, Cys2031, and Cys2052 each coordinate Zn(2+). The interval 2120-2208 (EFFTELDGVR…ASSSASQLSA (89 aa)) is FKBP8-binding. The tract at residues 2120–2332 (EFFTELDGVR…PVPPPRKKRT (213 aa)) is transcriptional activation. The interaction with non-structural protein 4A stretch occupies residues 2135–2139 (PPCKP). Residues 2187–2207 (GRRLARGSPPSEASSSASQLS) are disordered. Residues 2189–2441 (RLARGSPPSE…TPCAAEEQKL (253 aa)) form an interaction with host SKP2 region. Ser2194 bears the Phosphoserine; by host; in p56 mark. Residues Ser2197, Ser2201, Ser2204, Ser2207, and Ser2210 each carry the phosphoserine; by host; in p58 modification. Residues 2210 to 2249 (SLKATCTINHDSPDAELIEANLLWRQEMGGNITRVESENK) are ISDR. Positions 2210 to 2275 (SLKATCTINH…REISVPAEIL (66 aa)) are interaction with EIF2AK2/PKR. Residues 2249–2306 (KVVILDSFDPLVAEEDEREISVPAEILRKSRRFTQALPIWARPDYNPPLIETWKKPNY) form an NS4B-binding region. The tract at residues 2312–2334 (HGCPLPPPQSPPVPPPRKKRTVV) is disordered. The span at 2315-2326 (PLPPPQSPPVPP) shows a compositional bias: pro residues. Residues 2322-2325 (PPVP) carry the SH3-binding motif. Residues 2326–2334 (PPRKKRTVV) carry the Nuclear localization signal motif. Residue Lys2350 forms a Glycyl lysine isopeptide (Lys-Gly) (interchain with G-Cter in ubiquitin) linkage. A compositionally biased stretch (low complexity) spans 2351-2369 (SFGSSSTSGITGDNTTTSS). Residues 2351–2408 (SFGSSSTSGITGDNTTTSSEPAPSGCSPDSDAESYSSMPPLEGEPGDPDLSDGSWSTV) are disordered. The tract at residues 2354-2377 (SSSTSGITGDNTTTSSEPAPSGCS) is V3. Phosphoserine; by host occurs at positions 2449 and 2462. The region spanning 2634–2752 (PMGFSYDTRC…ICESAGVQED (119 aa)) is the RdRp catalytic domain. Residues Asp2640, Asp2738, and Asp2739 each coordinate Mg(2+). A helical transmembrane segment spans residues 2991 to 3011 (WFWFCLLLLAAGVGIYLLPNR).

This sequence belongs to the hepacivirus polyprotein family. As to quaternary structure, homooligomer. Interacts with E1 (via C-terminus). Interacts with the non-structural protein 5A. Interacts (via N-terminus) with host STAT1 (via SH2 domain); this interaction results in decreased STAT1 phosphorylation and ubiquitin-mediated proteasome-dependent STAT1 degradation, leading to decreased IFN-stimulated gene transcription. Interacts with host STAT3; this interaction constitutively activates STAT3. Interacts with host LTBR receptor. Interacts with host TNFRSF1A receptor and possibly induces apoptosis. Interacts with host HNRPK. Interacts with host YWHAE. Interacts with host UBE3A/E6AP. Interacts with host DDX3X. Interacts with host APOA2. Interacts with host RXRA protein. Interacts with host SP110 isoform 3/Sp110b; this interaction sequesters the transcriptional corepressor SP110 away from the nucleus. Interacts with host CREB3 nuclear transcription protein; this interaction triggers cell transformation. Interacts with host ACY3. Interacts with host C1QR1. Interacts with host RBM24; this interaction, which enhances the interaction of the mature core protein with 5'-UTR, may inhibit viral translation and favor replication. Interacts with host EIF2AK2/PKR; this interaction induces the autophosphorylation of EIF2AK2. Part of the viral assembly initiation complex composed of NS2, E1, E2, NS3, NS4A, NS5A and the mature core protein. In terms of assembly, forms a heterodimer with envelope glycoprotein E2. Interacts with mature core protein. Interacts with protease NS2. The heterodimer E1/E2 interacts with host CLDN1; this interaction plays a role in viral entry into host cell. Interacts with host SPSB2 (via C-terminus). Part of the viral assembly initiation complex composed of NS2, E1, E2, NS3, NS4A, NS5A and the mature core protein. Interacts with host NEURL3; this interaction prevents E1 binding to glycoprotein E2. Forms a heterodimer with envelope glycoprotein E1. Interacts with host CD81 and SCARB1 receptors; these interactions play a role in viral entry into host cell. Interacts with host EIF2AK2/PKR; this interaction inhibits EIF2AK2 and probably allows the virus to evade the innate immune response. Interacts with host CD209/DC-SIGN and CLEC4M/DC-SIGNR. Interact with host SPCS1; this interaction is essential for viral particle assembly. Interacts with protease NS2. The heterodimer E1/E2 interacts with host CLDN1; this interaction plays a role in viral entry into host cell. Part of the viral assembly initiation complex composed of NS2, E1, E2, NS3, NS4A, NS5A and the mature core protein. Interacts with host SLC3A2/4F2hc; the interaction may facilitate viral entry into host cell. Interacts with human PLSCR1. As to quaternary structure, homohexamer. Homoheptamer. Interacts with protease NS2. In terms of assembly, homodimer. Interacts with host SPCS1; this interaction is essential for viral particle assembly. Interacts with envelope glycoprotein E1. Interacts with envelope glycoprotein E2. Interacts with viroporin p7. Interacts with serine protease/helicase NS3. Part of the replication complex composed of NS2, NS3, NS4A, NS4B, NS5A and the RNA-directed RNA polymerase embedded in an ER-derived membranous web. Part of the viral assembly initiation complex composed of NS2, E1, E2, NS3, NS4A, NS5A and the mature core protein. Interacts with protease NS2. Interacts with non-structural protein 4A; this interaction stabilizes the folding of NS3 serine protease. NS3-NS4A interaction is essential for NS3 activation and allows membrane anchorage of the latter. NS3/NS4A complex also prevents phosphorylation of host IRF3, thus preventing the establishment of dsRNA induced antiviral state. Interacts with host MAVS; this interaction leads to the cleavage and inhibition of host MAVS. Interacts with host TICAM1; this interaction leads to the cleavage and inhibition of host TICAM1. Interacts with host TANK-binding kinase/TBK1; this interaction results in the inhibition of the association between TBK1 and IRF3, which leads to the inhibition of IRF3 activation. Interacts with host RBM24. Part of the replication complex composed of NS2, NS3, NS4A, NS4B, NS5A and the RNA-directed RNA polymerase embedded in an ER-derived membranous web. Part of the viral assembly initiation complex composed of NS2, E1, E2, NS3, NS4A, NS5A and the mature core protein. As to quaternary structure, interacts with NS3 serine protease; this interaction stabilizes the folding of NS3 serine protease. NS3-NS4A interaction is essential for NS3 activation and allows membrane anchorage of the latter. Interacts with non-structural protein 5A (via N-terminus). Part of the replication complex composed of NS2, NS3, NS4A, NS4B, NS5A and the RNA-directed RNA polymerase embedded in an ER-derived membranous web. Part of the viral assembly initiation complex composed of NS2, E1, E2, NS3, NS4A, NS5A and the mature core protein. In terms of assembly, homomultimer. Interacts with non-structural protein NS5A. Interacts with host PLA2G4C; this interaction likely initiates the recruitment of replication complexes to lipid droplets. Interacts with host STING; this interaction disrupts the interaction between STING and TBK1 thereby suppressing the interferon signaling. Part of the replication complex composed of NS2, NS3, NS4A, NS4B, NS5A and the RNA-directed RNA polymerase embedded in an ER-derived membranous web. Monomer. Homodimer; dimerization is required for RNA-binding. Interacts with the mature core protein. Interacts (via N-terminus) with non-structural protein 4A. Interacts with non-structural protein 4B. Interacts (via region D2) with RNA-directed RNA polymerase. Part of the viral assembly initiation complex composed of NS2, E1, E2, NS3, NS4A, NS5A and the mature core protein. Part of the replication complex composed of NS2, NS3, NS4A, NS4B, NS5A and the RNA-directed RNA polymerase embedded in an ER-derived membranous web. Interacts with host GRB2. Interacts with host BIN1. Interacts with host PIK3R1. Interacts with host SRCAP. Interacts with host FKBP8. Interacts (via C-terminus) with host VAPB (via MSP domain). Interacts with host EIF2AK2/PKR; this interaction leads to disruption of EIF2AK2 dimerization by NS5A and probably allows the virus to evade the innate immune response. Interacts (via N-terminus) with host PACSIN2 (via N-terminus); this interaction attenuates protein kinase C alpha-mediated phosphorylation of PACSIN2 by disrupting the interaction between PACSIN2 and PRKCA. Interacts (via N-terminus) with host SRC kinase (via SH2 domain). Interacts with most Src-family kinases. Interacts with host IFI27 and SKP2; promotes the ubiquitin-mediated proteasomal degradation of NS5A. Interacts with host GPS2. Interacts with host TNFRSF21; this interaction allows the modulation by the virus of JNK, p38 MAPK, STAT3, and Akt signaling pathways in a DR6-dependent manner. Interacts (via N-terminus) with host CIDEB (via N-terminus); this interaction seems to regulate the association of HCV particles with APOE. Interacts with host CHKA/Choline Kinase-alpha; CHKA bridges host PI4KA and NS5A and potentiates NS5A-stimulated PI4KA activity, which then facilitates the targeting of the ternary complex to the ER for viral replication. Interacts with host SPSB2 (via C-terminus); this interaction targets NS5A for ubiquitination and degradation. Interacts with host RAB18; this interaction may promote the association of NS5A and other replicase components with lipid droplets. Interacts (via region D2) with host PPIA/CYPA; the interaction stimulates RNA-binding ability of NS5A and is dependent on the peptidyl-prolyl cis-trans isomerase activity of PPIA/CYPA. Interacts with host TRIM14; this interaction induces the degradation of NS5A. As to quaternary structure, homooligomer. Interacts with non-structural protein 5A. Interacts with host VAPB. Interacts with host PRK2/PKN2. Interacts with host HNRNPA1 and SEPT6; these interactions facilitate viral replication. Part of the replication complex composed of NS2, NS3, NS4A, NS4B, NS5A and the RNA-directed RNA polymerase. Zn(2+) is required as a cofactor. The cofactor is Mg(2+). Post-translationally, specific enzymatic cleavages in vivo yield mature proteins. The structural proteins, core, E1, E2 and p7 are produced by proteolytic processing by host signal peptidases. The core protein precursor is synthesized as a 23 kDa, which is retained in the ER membrane through the hydrophobic signal peptide. Cleavage by the signal peptidase releases the 21 kDa mature core protein. The cleavage of the core protein precursor occurs between aminoacids 176 and 188 but the exact cleavage site is not known. Some degraded forms of the core protein appear as well during the course of infection. The other proteins (p7, NS2, NS3, NS4A, NS4B, NS5A and NS5B) are cleaved by the viral proteases. Autoprocessing between NS2 and NS3 is mediated by the NS2 cysteine protease catalytic domain and regulated by the NS3 N-terminal domain. In terms of processing, phosphorylated by host PKC and PKA. Ubiquitinated; mediated by UBE3A and leading to core protein subsequent proteasomal degradation. Post-translationally, highly N-glycosylated. In terms of processing, palmitoylation is required for NS2/3 autoprocessing and E2 recruitment to membranes. Palmitoylated. This modification may play a role in its polymerization or in protein-protein interactions. Post-translationally, phosphorylated on serines in a basal form termed p56. p58 is a hyperphosphorylated form of p56. p56 and p58 coexist in the cell in roughly equivalent amounts. Hyperphosphorylation is dependent on the presence of NS4A. Host CSNK1A1/CKI-alpha or RPS6KB1 kinases may be responsible for NS5A phosphorylation. In terms of processing, tyrosine phosphorylation is essential for the interaction with host SRC. The N-terminus is phosphorylated by host PRK2/PKN2.

The protein localises to the host endoplasmic reticulum membrane. It is found in the host mitochondrion membrane. Its subcellular location is the virion. The protein resides in the host cytoplasm. It localises to the host nucleus. The protein localises to the host lipid droplet. It is found in the virion membrane. Its subcellular location is the host mitochondrion. The protein resides in the host cell membrane. It localises to the host perinuclear region. The enzyme catalyses Hydrolysis of four peptide bonds in the viral precursor polyprotein, commonly with Asp or Glu in the P6 position, Cys or Thr in P1 and Ser or Ala in P1'.. It carries out the reaction a ribonucleoside 5'-triphosphate + H2O = a ribonucleoside 5'-diphosphate + phosphate + H(+). The catalysed reaction is ATP + H2O = ADP + phosphate + H(+). It catalyses the reaction RNA(n) + a ribonucleoside 5'-triphosphate = RNA(n+1) + diphosphate. Its activity is regulated as follows. Inhibited by the antiviral drug hexamethylene amiloride. Inhibition by amantadine appears to be genotype-dependent. Also inhibited by long-alkyl-chain iminosugar derivatives. Activity is up-regulated by PRK2/PKN2-mediated phosphorylation. Its function is as follows. Packages viral RNA to form a viral nucleocapsid, and promotes virion budding. Participates in the viral particle production as a result of its interaction with the non-structural protein 5A. Binds RNA and may function as a RNA chaperone to induce the RNA structural rearrangements taking place during virus replication. Modulates viral translation initiation by interacting with viral IRES and 40S ribosomal subunit. Affects various cell signaling pathways, host immunity and lipid metabolism. Prevents the establishment of cellular antiviral state by blocking the interferon-alpha/beta (IFN-alpha/beta) and IFN-gamma signaling pathways and by blocking the formation of phosphorylated STAT1 and promoting ubiquitin-mediated proteasome-dependent degradation of STAT1. Activates STAT3 leading to cellular transformation. Regulates the activity of cellular genes, including c-myc and c-fos. May repress the promoter of p53, and sequester CREB3 and SP110 isoform 3/Sp110b in the cytoplasm. Represses cell cycle negative regulating factor CDKN1A, thereby interrupting an important check point of normal cell cycle regulation. Targets transcription factors involved in the regulation of inflammatory responses and in the immune response: suppresses TNF-induced NF-kappa-B activation, and activates AP-1. Binds to dendritic cells (DCs) via C1QR1, resulting in down-regulation of T-lymphocytes proliferation. Alters lipid metabolism by interacting with hepatocellular proteins involved in lipid accumulation and storage. Induces up-regulation of FAS promoter activity, and thereby contributes to the increased triglyceride accumulation in hepatocytes (steatosis). Functionally, forms a heterodimer with envelope glycoprotein E2, which mediates virus attachment to the host cell, virion internalization through clathrin-dependent endocytosis and fusion with host membrane. Fusion with the host cell is most likely mediated by both E1 and E2, through conformational rearrangements of the heterodimer required for fusion rather than a classical class II fusion mechanism. E1/E2 heterodimer binds host apolipoproteins such as APOB and ApoE thereby forming a lipo-viro-particle (LVP). APOE associated to the LVP allows the initial virus attachment to cell surface receptors such as the heparan sulfate proteoglycans (HSPGs), syndecan-1 (SDC1), syndecan-1 (SDC2), the low-density lipoprotein receptor (LDLR) and scavenger receptor class B type I (SCARB1). The cholesterol transfer activity of SCARB1 allows E2 exposure and binding of E2 to SCARB1 and the tetraspanin CD81. E1/E2 heterodimer binding on CD81 activates the epithelial growth factor receptor (EGFR) signaling pathway. Diffusion of the complex E1-E2-EGFR-SCARB1-CD81 to the cell lateral membrane allows further interaction with Claudin 1 (CLDN1) and occludin (OCLN) to finally trigger HCV entry. In terms of biological role, forms a heterodimer with envelope glycoprotein E1, which mediates virus attachment to the host cell, virion internalization through clathrin-dependent endocytosis and fusion with host membrane. Fusion with the host cell is most likely mediated by both E1 and E2, through conformational rearrangements of the heterodimer required for fusion rather than a classical class II fusion mechanism. The interaction between envelope glycoprotein E2 and host apolipoprotein E/APOE allows the proper assembly, maturation and infectivity of the viral particles. This interaction is probably promoted via the up-regulation of cellular autophagy by the virus. E1/E2 heterodimer binds host apolipoproteins such as APOB and APOE thereby forming a lipo-viro-particle (LVP). APOE associated to the LVP allows the initial virus attachment to cell surface receptors such as the heparan sulfate proteoglycans (HSPGs), syndecan-1 (SDC1), syndecan-1 (SDC2), the low-density lipoprotein receptor (LDLR) and scavenger receptor class B type I (SCARB1). The cholesterol transfer activity of SCARB1 allows E2 exposure and binding of E2 to SCARB1 and the tetraspanin CD81. E1/E2 heterodimer binding on CD81 activates the epithelial growth factor receptor (EGFR) signaling pathway. Diffusion of the complex E1-E2-EGFR-SCARB1-CD81 to the cell lateral membrane allows further interaction with Claudin 1 (CLDN1) and occludin (OCLN) to finally trigger HCV entry. Inhibits host EIF2AK2/PKR activation, preventing the establishment of an antiviral state. Viral ligand for CD209/DC-SIGN and CLEC4M/DC-SIGNR, which are respectively found on dendritic cells (DCs), and on liver sinusoidal endothelial cells and macrophage-like cells of lymph node sinuses. These interactions allow the capture of circulating HCV particles by these cells and subsequent facilitated transmission to permissive cells such as hepatocytes and lymphocyte subpopulations. The interaction between E2 and host amino acid transporter complex formed by SLC3A2 and SLC7A5/LAT1 may facilitate viral entry into host cell. Ion channel protein that acts as a viroporin and plays an essential role in the assembly, envelopment and secretion of viral particles. Regulates the host cell secretory pathway, which induces the intracellular retention of viral glycoproteins and favors assembly of viral particles. Creates a pore in acidic organelles and releases Ca(2+) and H(+) in the cytoplasm of infected cells, leading to a productive viral infection. High levels of cytoplasmic Ca(2+) may trigger membrane trafficking and transport of viral ER-associated proteins to viroplasms, sites of viral genome replication. This ionic imbalance induces the assembly of the inflammasome complex, which triggers the maturation of pro-IL-1beta into IL-1beta through the action of caspase-1. Targets also host mitochondria and induces mitochondrial depolarization. In addition of its role as a viroporin, acts as a lipid raft adhesion factor. Its function is as follows. Cysteine protease required for the proteolytic auto-cleavage between the non-structural proteins NS2 and NS3. The N-terminus of NS3 is required for the function of NS2 protease (active region NS2-3). Promotes the initiation of viral particle assembly by mediating the interaction between structural and non-structural proteins. Functionally, displays three enzymatic activities: serine protease with a chymotrypsin-like fold, NTPase and RNA helicase. NS3 serine protease, in association with NS4A, is responsible for the cleavages of NS3-NS4A, NS4A-NS4B, NS4B-NS5A and NS5A-NS5B. The NS3/NS4A complex prevents phosphorylation of host IRF3, thus preventing the establishment of dsRNA induced antiviral state. The NS3/NS4A complex induces host amino acid transporter component SLC3A2, thus contributing to HCV propagation. NS3 RNA helicase binds to RNA and unwinds both dsDNA and dsRNA in the 3' to 5' direction, and likely resolves RNA complicated stable secondary structures in the template strand. Binds a single ATP and catalyzes the unzipping of a single base pair of dsRNA. Inhibits host antiviral proteins TBK1 and IRF3 thereby preventing the establishment of an antiviral state. Cleaves host MAVS/CARDIF thereby preventing the establishment of an antiviral state. Cleaves host TICAM1/TRIF, thereby disrupting TLR3 signaling and preventing the establishment of an antiviral state. In terms of biological role, induces a specific membrane alteration that serves as a scaffold for the virus replication complex. This membrane alteration gives rise to the so-called ER-derived membranous web that contains the replication complex. NS4B self-interaction contributes to its function in membranous web formation. Promotes host TRIF protein degradation in a CASP8-dependent manner thereby inhibiting host TLR3-mediated interferon signaling. Disrupts the interaction between STING and TBK1 contributing to the inhibition of interferon signaling. Phosphorylated protein that is indispensable for viral replication and assembly. Both hypo- and hyperphosphorylated states are required for the viral life cycle. The hyperphosphorylated form of NS5A is an inhibitor of viral replication. Involved in RNA-binding and especially in binding to the viral genome. Zinc is essential for RNA-binding. Participates in the viral particle production as a result of its interaction with the mature viral core protein. Its interaction with host VAPB may target the viral replication complex to vesicles. Down-regulates viral IRES translation initiation. Mediates interferon resistance, presumably by interacting with and inhibiting host EIF2AK2/PKR. Prevents BIN1-induced apoptosis. Acts as a transcriptional activator of some host genes important for viral replication when localized in the nucleus. Via the interaction with host PACSIN2, modulates lipid droplet formation in order to promote virion assembly. Modulates TNFRSF21/DR6 signaling pathway for viral propagation. Its function is as follows. RNA-dependent RNA polymerase that performs primer-template recognition and RNA synthesis during viral replication. Initiates RNA transcription/replication at a flavin adenine dinucleotide (FAD), resulting in a 5'- FAD cap on viral RNAs. In this way, recognition of viral 5' RNA by host pattern recognition receptors can be bypassed, thereby evading activation of antiviral pathways. In Hepatitis C virus genotype 1b (isolate HC-J1) (HCV), this protein is Genome polyprotein.